Reading from the N-terminus, the 553-residue chain is PE cleavage protein A (553 aa).

One can recognise a PE domain in the interval 1-92 (MSLLVVAPEW…SAGSYSAAEA (92 aa)). D293 is an active-site residue.

The protein belongs to the mycobacterial PE family. PGRS subfamily. In terms of processing, undergoes auto-proteolytic processing.

It localises to the secreted. The protein resides in the cell surface. Functionally, aspartic protease that processes the lipase LipY and other PE_PGRS proteins. Can also cleave itself. Cleaves LipY both inside the PE domain, before amino acid 98, and after amino acids 136 and 149. Involved in virulence. This is PE cleavage protein A from Mycobacterium marinum (strain ATCC BAA-535 / M).